Consider the following 264-residue polypeptide: MLELRLVQGSLLKKVLESIKDLVNDANFDCSATGFSLQAMDSSHVALVALLLRSEGFEHYRCDRNISMGMNLANMAKMLKCAGNDDIITLKADDGSDTVTFMFESPTQDKIADFEMKLMDIDSEHLGIPEAEYHAIVRMPSAEFSRICKDLSSIGDTVVISVTKEGVKFSTRGDIGTANIVCRQNTTVDKPEEATVIEMNEPVSLTFALRYLNSFTKATPLSNTVTISLSSELPVVVEYKIAEMGYIRFYLAPKIEEDEEETKP.

The DNA-binding element occupies 61-80 (RCDRNISMGMNLANMAKMLK).

It belongs to the PCNA family.

The protein resides in the nucleus. In terms of biological role, this protein is an auxiliary protein of DNA polymerase delta and is involved in the control of eukaryotic DNA replication by increasing the polymerase's processibility during elongation of the leading strand. The polypeptide is Proliferating cell nuclear antigen (PCNA) (Nicotiana tabacum (Common tobacco)).